We begin with the raw amino-acid sequence, 279 residues long: MWRMRVVHSTGYVYESPATASFNEARLTPRSNTRQTVILNRVETIPATRSYRYIDYWGTVVTAFDLRAPHTELTVTSSSVVETESLEPSVSRITWTELQSMAVIDRFDEVLQPTAYTPVNTRVAAVGKRIAKNHEPRKAVVAAARWARSKLDYIPGTTGVHSSGLDALHQCRGVCQDFAHLTLIVLRSMGIPGRYVSGYLHPKRDAVVGKTVEGRSHAWIQAWTGGWWNYDPTNDVEITEQYISVGVGRDYTDVAPLKGIYSGRGATDLDVVVEITRLA.

This sequence to M.tuberculosis Rv2569c.

This is an uncharacterized protein from Mycobacterium leprae (strain TN).